The sequence spans 302 residues: Sulfate adenylyltransferase subunit 2 (302 aa).

The protein belongs to the PAPS reductase family. CysD subfamily. In terms of assembly, heterodimer composed of CysD, the smaller subunit, and CysN.

It carries out the reaction sulfate + ATP + H(+) = adenosine 5'-phosphosulfate + diphosphate. It functions in the pathway sulfur metabolism; hydrogen sulfide biosynthesis; sulfite from sulfate: step 1/3. In terms of biological role, with CysN forms the ATP sulfurylase (ATPS) that catalyzes the adenylation of sulfate producing adenosine 5'-phosphosulfate (APS) and diphosphate, the first enzymatic step in sulfur assimilation pathway. APS synthesis involves the formation of a high-energy phosphoric-sulfuric acid anhydride bond driven by GTP hydrolysis by CysN coupled to ATP hydrolysis by CysD. This chain is Sulfate adenylyltransferase subunit 2, found in Salmonella paratyphi A (strain AKU_12601).